The sequence spans 127 residues: MNFSGKYQVQTQENYEAFMKAVGMPDDIIQKGKDIKGVSEIVQNGKHFKFIITAGSKVIQNEFTLGEECEMEFMTGEKIKAVVQQEGDNKLVTTFKGIKSVTEFNGDTVTSTMTKGDVVFKRVSKRI.

At M1 the chain carries N-acetylmethionine. N6-succinyllysine occurs at positions 31 and 36. S39 carries the phosphoserine modification. Position 46 is an N6-succinyllysine (K46). S56 bears the Phosphoserine mark. An N6-succinyllysine mark is found at K57, K78, and K90. S100 carries the phosphoserine modification. N105 bears the Deamidated asparagine; alternate mark. A cross-link (isoaspartyl glycine isopeptide (Asn-Gly); alternate) is located at residues 105 to 106 (NG). N6-succinyllysine is present on K121.

The protein belongs to the calycin superfamily. Fatty-acid binding protein (FABP) family. As to quaternary structure, monomer. In terms of processing, deamidation and transpeptidation at the beta carboxyl of Asn-105 forms an isoaspartyl residue and Edman degradation appears as though blocked. This rearrangement gives rise to an extra negative charge carried by the acid form.

It is found in the cytoplasm. Plays a role in lipoprotein-mediated cholesterol uptake in hepatocytes. Binds cholesterol. Binds free fatty acids and their coenzyme A derivatives, bilirubin, and some other small molecules in the cytoplasm. May be involved in intracellular lipid transport. This chain is Fatty acid-binding protein, liver (FABP1), found in Bos taurus (Bovine).